We begin with the raw amino-acid sequence, 158 residues long: DNA-binding transcriptional repressor RacR (158 aa).

Homooctamer.

Its function is as follows. Transcriptional regulator that represses the expression of ydaS and ydaT under normal physiological conditions. It binds to its own upstream sequence and represses the adjacent and divergently coded ydaS-ydaT operon. RacR-mediated down-regulation of ydaS and ydaT may be critical for cell survival. RacR ensures that the prophage DNA is maintained in the genome. When the expression of the racR gene is reduced, the prophage Rac is excised from the genome, possibly to counteract the lethal toxicity of YdaT. The sequence is that of DNA-binding transcriptional repressor RacR (racR) from Escherichia coli (strain K12).